Reading from the N-terminus, the 758-residue chain is MSDKDRITQLLRKLEEAKAREEEAKAREAQERCEKERLQLEHRKTTFLEYLRNCHRHLYNALRLTDTSRSSTGYTKVVGKYYPKRLRPWTNFTNVLHPRYFDLVQKICGQRQLFEPASTTKNLGTIISDHLAGNEKAIDRFEVDAVERPVQGILKVLATHEEAGKAYRCPEFRFSANLRELTQEDDRSSGADDNTSDGSLERRQQAGPNKRPTSKRKYICSNRQPDGVGIRMQPGGGQTQAFIYDYKAAHKVAIEHVRSATAKEHLFHEVVARINDDKLSRDEEVQRREQAEAFIAMALTQVFDYMITYGVSYGYVAAGRCLLLLYVDRDDWQTLYCHPCLPADDVGEPTNDWTDRLSHTAVAQLVSFCLSSFQSEALEGQSLETALSVAKATLKTWSESYADVAYLGLEPPELSSAASSQNTENSEYTSEAKPTGRKVALRSQSSCKPAAVLPQGNEHDEHDEDHSEPGASRSRLAANKRKRGPSSGGEDEDIAMADPEPTRQYCTQACLLGLKRGKDLDENCPNVSLHRFDGSSRHPVNAHRFTDMVKQQLLLSPYKGCRMVDFWDKRGAMGWLFKLELFPYGYTFVGKGTLEDRLSRLEHEGRVYARLDHLQGDVVPVHLGLVRLDRGYILPGLEFVVYMMLMSWAGQTPSASMADAETLKRESLTAIWSEGVDHGDDNRANYLWNAERCRIMIIDFDRAHLFPPLKARAVSRLSKPKRKRETPNSYLTEITGREARYVFKQMDRSPRATPSHGG.

Residues 4–41 (KDRITQLLRKLEEAKAREEEAKAREAQERCEKERLQLE) are a coiled coil. 2 disordered regions span residues 180-230 (ELTQ…GVGI) and 414-499 (LSSA…MADP). The span at 181–190 (LTQEDDRSSG) shows a compositional bias: basic and acidic residues. Polar residues predominate over residues 416-429 (SAASSQNTENSEYT). Residues 457 to 468 (NEHDEHDEDHSE) are compositionally biased toward basic and acidic residues.

Its subcellular location is the cytoplasm. It is found in the nucleus. Promotes unequal transmission of alleles from the parental zygote to progeny spores by acting as poison/antidote system, leading to poisoning of progeny that do not inherit the allele. May possess DNA nuclease activity that leads to spore killing, and a kinase activity that confers resistance to the nuclease activity. Can suppress meiotic drive by the P.comata SPOK1 protein. This chain is Meiotic driver SPOK4, found in Podospora anserina (Pleurage anserina).